We begin with the raw amino-acid sequence, 527 residues long: Phospholipase A1-Igamma3, chloroplastic (527 aa).

The N-terminal 52 residues, 1–52, are a transit peptide targeting the chloroplast; it reads MASLSLPITLKNPRFFSSSPQNIFKTQPQTLVLTTKFKTCSIICSSSCTSIS. Low complexity predominate over residues 55–65; it reads TTQQKQSNKQT. A disordered region spans residues 55-82; the sequence is TTQQKQSNKQTHVSDNKREEKAEEEEEE. Residues 66–75 show a composition bias toward basic and acidic residues; it reads HVSDNKREEK. The GXSXG motif lies at 300–304; the sequence is GHSLG. Residue S302 is the Acyl-ester intermediate of the active site. Residues D366 and H423 each act as charge relay system in the active site.

It belongs to the AB hydrolase superfamily. Lipase family. As to expression, highly expressed in flowers. Lower levels in seedlings, leaves and stems.

The protein localises to the plastid. It is found in the chloroplast. It catalyses the reaction 1,2-dihexadecanoyl-sn-glycero-3-phosphocholine + H2O = 2-hexadecanoyl-sn-glycero-3-phosphocholine + hexadecanoate + H(+). It carries out the reaction a 1,2-diacyl-3-O-(beta-D-galactosyl)-sn-glycerol + H2O = an acyl-3-O-(beta-D-galactosyl)-sn-glycerol + a fatty acid + H(+). The catalysed reaction is a 1,2-diacyl-3-O-[alpha-D-galactosyl-(1-&gt;6)-beta-D-galactosyl]-sn-glycerol + H2O = acyl-3-O-[alpha-D-galactosyl-(1-&gt;6)-beta-D-galactosyl]-sn-glycerol + a fatty acid + H(+). Acylhydrolase that catalyzes the hydrolysis of phosphatidylcholine at the sn-1 position. Moderate activity toward phosphatidylcholine (PC), monogalactosyldiacylglycerol (MGDG), digalactosyldiacylglycerol (DGDG) and triacylglycerol (TAG). The protein is Phospholipase A1-Igamma3, chloroplastic of Arabidopsis thaliana (Mouse-ear cress).